The sequence spans 686 residues: Methionine--tRNA ligase (686 aa).

Residues 13 to 23 (PYANGQIHIGH) carry the 'HIGH' region motif. C144, C147, C157, and C160 together coordinate Zn(2+). Positions 335–339 (KMSKS) match the 'KMSKS' region motif. K338 is a binding site for ATP. Residues 580–686 (DFAKVDLRVA…EGAVPGMRIG (107 aa)) form the tRNA-binding domain.

Belongs to the class-I aminoacyl-tRNA synthetase family. MetG type 1 subfamily. As to quaternary structure, homodimer. Zn(2+) is required as a cofactor.

The protein resides in the cytoplasm. It carries out the reaction tRNA(Met) + L-methionine + ATP = L-methionyl-tRNA(Met) + AMP + diphosphate. Is required not only for elongation of protein synthesis but also for the initiation of all mRNA translation through initiator tRNA(fMet) aminoacylation. The chain is Methionine--tRNA ligase from Cupriavidus necator (strain ATCC 17699 / DSM 428 / KCTC 22496 / NCIMB 10442 / H16 / Stanier 337) (Ralstonia eutropha).